A 185-amino-acid chain; its full sequence is dCTP deaminase (185 aa).

107-112 (KSTYAR) provides a ligand contact to dCTP. The Proton donor/acceptor role is filled by Glu-133. Residues Gln-152, Tyr-166, and Gln-176 each coordinate dCTP.

This sequence belongs to the dCTP deaminase family. Homotrimer.

The enzyme catalyses dCTP + H2O + H(+) = dUTP + NH4(+). It participates in pyrimidine metabolism; dUMP biosynthesis; dUMP from dCTP (dUTP route): step 1/2. In terms of biological role, catalyzes the deamination of dCTP to dUTP. This chain is dCTP deaminase, found in Nitratiruptor sp. (strain SB155-2).